A 555-amino-acid chain; its full sequence is MAETKKETLAEKVKRLSRGLRGSLVDSLKDEHTGSLRSDDQLLLKFHGMYQQDDRDRRDERALKKLERLYSFMIRLRIPGGMIGPVHWEALHNVAGENSTGTIKITTRQTVQLHGILKSKIKPTIKAFDSVFLDSIAACGDVNRNVTCTSNPAASPLHKEVFGYAGEISRSLLPKTRAYYEIWLDENLLAEKEEPEDPLYKDVYLPRKFKIAIAIPPYNDVDLFTNDIGLIAIIENGQLLGFNVAVGGGLGTTHGNPDTYPRVGTVFGFIPKKDILRVVYEIVTVQRDFGNREDRKLSRLKYTLDRLGVEFYKREVEKRAGISFESAKDFQFTTRSDDFGWKQDAAGNWHYTVFVENGRVCDEHGYNLKTALLEVSKTRRATFRFTCNQNLILSDIFPKDKDLIESILVKFGVHRKTAEVSPIRKNSIACVALNTCSLALAEAQRYLPSLIDKIEPILSKHGLSEEPISIRMTGCPNGCARPYISEIGLVGTSYGKYNLHVGADAEGYRLNKKYKEDLDESAILQELDGLFGKFSKDRKGKESFGDYINRIGILK.

4 residues coordinate [4Fe-4S] cluster: C430, C436, C475, and C479. C479 lines the siroheme pocket.

Belongs to the nitrite and sulfite reductase 4Fe-4S domain family. Alpha(8)-beta(8). The alpha component is a flavoprotein, the beta component is a hemoprotein. It depends on siroheme as a cofactor. [4Fe-4S] cluster is required as a cofactor.

It catalyses the reaction hydrogen sulfide + 3 NADP(+) + 3 H2O = sulfite + 3 NADPH + 4 H(+). It functions in the pathway sulfur metabolism; hydrogen sulfide biosynthesis; hydrogen sulfide from sulfite (NADPH route): step 1/1. In terms of biological role, component of the sulfite reductase complex that catalyzes the 6-electron reduction of sulfite to sulfide. This is one of several activities required for the biosynthesis of L-cysteine from sulfate. The chain is Sulfite reductase [NADPH] hemoprotein beta-component from Leptospira biflexa serovar Patoc (strain Patoc 1 / Ames).